A 389-amino-acid chain; its full sequence is Cobalt-precorrin-5B C(1)-methyltransferase (389 aa).

Residues 1–25 (MESRADHAVPADEGHGATEPPRGRD) are disordered.

It belongs to the CbiD family.

It carries out the reaction Co-precorrin-5B + S-adenosyl-L-methionine = Co-precorrin-6A + S-adenosyl-L-homocysteine. The protein operates within cofactor biosynthesis; adenosylcobalamin biosynthesis; cob(II)yrinate a,c-diamide from sirohydrochlorin (anaerobic route): step 6/10. Functionally, catalyzes the methylation of C-1 in cobalt-precorrin-5B to form cobalt-precorrin-6A. In Nitratidesulfovibrio vulgaris (strain ATCC 29579 / DSM 644 / CCUG 34227 / NCIMB 8303 / VKM B-1760 / Hildenborough) (Desulfovibrio vulgaris), this protein is Cobalt-precorrin-5B C(1)-methyltransferase.